The following is a 268-amino-acid chain: Testis-specific serine/threonine-protein kinase 3 (268 aa).

The region spanning 10 to 265 (YQLGKTIGEG…IEEVSWHPWL (256 aa)) is the Protein kinase domain. ATP is bound by residues 16 to 24 (IGEGTYSKV) and Lys39. Asp134 functions as the Proton acceptor in the catalytic mechanism. At Ser166 the chain carries Phosphoserine; by autocatalysis. At Thr168 the chain carries Phosphothreonine; by PDPK1.

The protein belongs to the protein kinase superfamily. CAMK Ser/Thr protein kinase family. It depends on Mg(2+) as a cofactor. Mn(2+) is required as a cofactor. In terms of processing, autophosphorylated at Ser-166. Phosphorylation at Thr-168 by PDPK1 activates the serine/threonine protein kinase activity. In terms of tissue distribution, developmentally expressed in testicular germ cells. In adult testis, expression was detected in round and condensing spermatids, but not in meiotic pachytene spermatocytes. Not expressed in brain, ovary, kidney, liver or early embryonic cells.

The protein resides in the cell projection. It localises to the cilium. Its subcellular location is the flagellum. The enzyme catalyses L-seryl-[protein] + ATP = O-phospho-L-seryl-[protein] + ADP + H(+). The catalysed reaction is L-threonyl-[protein] + ATP = O-phospho-L-threonyl-[protein] + ADP + H(+). With respect to regulation, activated by phosphorylation on Thr-168 by PDPK1. Functionally, serine/threonine protein kinase required for spermatid development and male fertility. This Mus musculus (Mouse) protein is Testis-specific serine/threonine-protein kinase 3.